The sequence spans 158 residues: MIDDNGYRLNVGIVLCNTHQQVLWARKYKQHYCWQFPQGGINIGETPEQAMYRELFEEIGLNYQDVRILSSTQYWMHYKLPKKLIRWKIRPICFGQKQKWFLLKLLSKDTRINIKSNKDYTFDRWKWVSLWYPIRRVVFFKRDVYRKVMQEFVDVIIS.

The Nudix hydrolase domain occupies 6–150; sequence GYRLNVGIVL…KRDVYRKVMQ (145 aa). The short motif at 39–60 is the Nudix box element; sequence GGINIGETPEQAMYRELFEEIG.

Belongs to the Nudix hydrolase family. RppH subfamily. It depends on a divalent metal cation as a cofactor.

In terms of biological role, accelerates the degradation of transcripts by removing pyrophosphate from the 5'-end of triphosphorylated RNA, leading to a more labile monophosphorylated state that can stimulate subsequent ribonuclease cleavage. This chain is RNA pyrophosphohydrolase, found in Blochmanniella pennsylvanica (strain BPEN).